The chain runs to 350 residues: Small ribosomal subunit biogenesis GTPase RsgA (350 aa).

Over residues 1–17 (MSKNKLSKGQQRRVNAN) the composition is skewed to polar residues. Residues 1–33 (MSKNKLSKGQQRRVNANHQRRLKTSKEKPDYDD) are disordered. A CP-type G domain is found at 104–273 (TSVLTRPDFY…VIDSPGVREF (170 aa)). GTP contacts are provided by residues 160-163 (NKID) and 214-222 (GQSGVGKSS). 4 residues coordinate Zn(2+): cysteine 297, cysteine 302, histidine 304, and cysteine 310.

Belongs to the TRAFAC class YlqF/YawG GTPase family. RsgA subfamily. Monomer. Associates with 30S ribosomal subunit, binds 16S rRNA. The cofactor is Zn(2+).

It localises to the cytoplasm. Functionally, one of several proteins that assist in the late maturation steps of the functional core of the 30S ribosomal subunit. Helps release RbfA from mature subunits. May play a role in the assembly of ribosomal proteins into the subunit. Circularly permuted GTPase that catalyzes slow GTP hydrolysis, GTPase activity is stimulated by the 30S ribosomal subunit. This chain is Small ribosomal subunit biogenesis GTPase RsgA, found in Shigella flexneri.